A 475-amino-acid polypeptide reads, in one-letter code: Probable phenylalanine--tRNA ligase alpha subunit (475 aa).

Residues 2 to 151 form a contains the major tRNA-Phe binding sites region; it reads TAVAQKIIEN…KRKLVSRRKK (150 aa). Residues Thr309, 351–353, and Tyr391 contribute to the L-phenylalanine site; that span reads QVE. Residue Glu393 coordinates Mg(2+). L-phenylalanine is bound at residue Phe417.

Belongs to the class-II aminoacyl-tRNA synthetase family. Phe-tRNA synthetase alpha subunit type 2 subfamily. As to quaternary structure, tetramer of two alpha and two beta subunits. Mg(2+) serves as cofactor.

The protein resides in the cytoplasm. It carries out the reaction tRNA(Phe) + L-phenylalanine + ATP = L-phenylalanyl-tRNA(Phe) + AMP + diphosphate + H(+). The chain is Probable phenylalanine--tRNA ligase alpha subunit from Encephalitozoon cuniculi (strain GB-M1) (Microsporidian parasite).